The chain runs to 536 residues: MLRPLLLLWLWGRLGALTQGTPAGTAPTKDVVDLEFYTKRLFQSVSPSFLSITIDASLATDPRFLTFLGSPRLRALARGLSPAYLRFGGTKTDFLIFDPNKEPTSEERSYWQSQDNNDICGSERVSADVLRKLQMEWPFQELLLLREQYQREFKNSTYSRSSVDMLYSFAKCSRLDLIFGLNALLRTPDLRWNSSNAQLLLNYCSSKGYNISWELGNEPNSFWKKAHISIDGLQLGEDFVELHKLLQKSAFQNAKLYGPDIGQPRGKTVKLLRSFLKAGGEVIDSLTWHHYYLNGRVATKEDFLSSDVLDTFILSVQKILKVTKEMTPGKKVWLGETSSAYGGGAPLLSDTFAAGFMWLDKLGLSAQLGIEVVMRQVFFGAGNYHLVDENFEPLPDYWLSLLFKKLVGPKVLMSRVKGPDRSKLRVYLHCTNVYHPRYREGDLTLYVLNLHNVTKHLKLPPPMFSRPVDKYLLKPFGSDGLLSKSVQLNGQTLKMVDEQTLPALTEKPLPAGSSLSVPAFSYGFFVIRNAKIAACI.

A signal peptide spans 1-28; sequence MLRPLLLLWLWGRLGALTQGTPAGTAPT. Residues 55-57 and threonine 90 contribute to the heparan sulfate group site; that span reads DAS. A propeptide spans 103 to 150 (linker peptide); sequence PTSEERSYWQSQDNNDICGSERVSADVLRKLQMEWPFQELLLLREQYQ. Cysteine 120 and cysteine 172 form a disulfide bridge. 151–155 serves as a coordination point for heparan sulfate group; that stretch reads REFKN. 3 N-linked (GlcNAc...) asparagine glycosylation sites follow: asparagine 155, asparagine 193, and asparagine 210. Glutamate 218 serves as the catalytic Proton donor. Heparan sulfate group contacts are provided by residues 263–273, histidine 289, and arginine 296; that span reads QPRGKTVKLLR. The segment at 281–410 is required for heterodimerization with the heparanase 8 kDa subunit; sequence EVIDSLTWHH…LLFKKLVGPK (130 aa). The Nucleophile role is filled by glutamate 336. Residues 341–343 and 382–384 each bind heparan sulfate group; these read YGG and GNY. A disulfide bridge links cysteine 430 with cysteine 535. An N-linked (GlcNAc...) asparagine glycan is attached at asparagine 452. The tract at residues 520 to 536 is required for transferring proheparanase to the Golgi apparatus, secretion and subsequent enzyme activity and for enhancement of PKB/AKT1 phosphorylation; sequence FSYGFFVIRNAKIAACI.

It belongs to the glycosyl hydrolase 79 family. In terms of assembly, heterodimer; heterodimer formation between the 8 kDa and the 50 kDa subunits is required for enzyme activity. Interacts with TF; the interaction, inhibited by heparin, enhances the generation of activated factor X and activates coagulation. Interacts with HRG; the interaction is enhanced at acidic pH, partially inhibits binding of HPSE to cell surface receptors and modulates its enzymatic activity. Interacts with SDC1; the interaction enhances the shedding of SDC1. Interacts with HPSE2. Proteolytically processed. The cleavage of the 65 kDa form leads to the generation of a linker peptide, and the 8 kDa and 50 kDa products. The active form, the 8/50 kDa heterodimer, is resistant to degradation. Complete removal of the linker peptide appears to be a prerequisite to the complete activation of the enzyme. In terms of processing, N-glycosylated. Glycosylation of the 50 kDa subunit appears to be essential for its solubility.

Its subcellular location is the lysosome membrane. It is found in the secreted. The protein resides in the nucleus. It carries out the reaction endohydrolysis of (1-&gt;4)-beta-D-glycosidic bonds of heparan sulfate chains in heparan sulfate proteoglycan.. Inhibited by laminarin sulfate and, to a lower extent, by heparin and sulfamin. Activated by calcium and magnesium. Inhibited by EDTA. Endoglycosidase that cleaves heparan sulfate proteoglycans (HSPGs) into heparan sulfate side chains and core proteoglycans. Participates in extracellular matrix (ECM) degradation and remodeling. Selectively cleaves the linkage between a glucuronic acid unit and an N-sulfo glucosamine unit carrying either a 3-O-sulfo or a 6-O-sulfo group. Can also cleave the linkage between a glucuronic acid unit and an N-sulfo glucosamine unit carrying a 2-O-sulfo group, but not linkages between a glucuronic acid unit and a 2-O-sulfated iduronic acid moiety. It is essentially inactive at neutral pH but becomes active under acidic conditions such as during tumor invasion and in inflammatory processes. Facilitates cell migration associated with metastasis, wound healing and inflammation. Enhances shedding of syndecans, and increases endothelial invasion and angiogenesis in myelomas. Acts as a procoagulant by increasing the generation of activation factor X in the presence of tissue factor and activation factor VII. Increases cell adhesion to the extracellular matrix (ECM), independent of its enzymatic activity. Induces AKT1/PKB phosphorylation via lipid rafts increasing cell mobility and invasion. Heparin increases this AKT1/PKB activation. Regulates osteogenesis. Enhances angiogenesis through up-regulation of SRC-mediated activation of VEGF. Implicated in hair follicle inner root sheath differentiation and hair homeostasis. The polypeptide is Heparanase (Hpse) (Rattus norvegicus (Rat)).